Consider the following 179-residue polypeptide: Protein GrpE (179 aa).

Residues 1–22 are disordered; sequence MTDNNIENNEEEIRKAPSANDR. A compositionally biased stretch (basic and acidic residues) spans 11–22; that stretch reads EEIRKAPSANDR.

Belongs to the GrpE family. As to quaternary structure, homodimer.

The protein localises to the cytoplasm. Its function is as follows. Participates actively in the response to hyperosmotic and heat shock by preventing the aggregation of stress-denatured proteins, in association with DnaK and GrpE. It is the nucleotide exchange factor for DnaK and may function as a thermosensor. Unfolded proteins bind initially to DnaJ; upon interaction with the DnaJ-bound protein, DnaK hydrolyzes its bound ATP, resulting in the formation of a stable complex. GrpE releases ADP from DnaK; ATP binding to DnaK triggers the release of the substrate protein, thus completing the reaction cycle. Several rounds of ATP-dependent interactions between DnaJ, DnaK and GrpE are required for fully efficient folding. The sequence is that of Protein GrpE from Rickettsia canadensis (strain McKiel).